The following is a 339-amino-acid chain: MQKEAVRDAANLPSIRSLVRAVGFEGRSLHSINDLTNDQIYALFELARALEPFHRSSVDLLRGSVMVTLFFQPSTRTRMSFETAMHRLGGAVVTEANPLVSSSAAKEESLADTMRTISKYANVIVLRHPDDVAAREGASYSESPVINGGWGDWEHPTQALLDLYTLWRTHGGVEGAKVVVATPDMVHARTGHSMAYGLARLGAEVTLASRSDYRAPEEVIEGLRRVEGAKVREVFDLDQDGFNDLVSEMDLVYLPGCSAPKGEAAEEFKKMMDEYYVRLETLEKVRESEGRIIRVTHTLPRRPGEMDLRIDDTPHQQYFEAIAYSVAIRMALVAAIVGA.

Belongs to the aspartate/ornithine carbamoyltransferase superfamily. In terms of assembly, homodimer.

It catalyses the reaction (S)-2-ureidoglycine + carbamoyl phosphate = allantoate + phosphate + H(+). The protein operates within purine metabolism. In terms of biological role, catalyzes the phosphorolysis of allantoate to ureidoglycine and carbamoyl phosphate. Is likely involved in a purine degradation pathway. This is Ureidoglycine carbamoyltransferase from Rubrobacter xylanophilus (strain DSM 9941 / JCM 11954 / NBRC 16129 / PRD-1).